A 262-amino-acid chain; its full sequence is MAVGKNKRISKGKKGSKKKTVDPFAKKDWYDIKAPSVFNVRNIGKTLVSRTQGTKIASEGLKHRVFEVSLADLQNDEDQAYRKIRLRAEDVQGKNVLTNFWGMSFTTDKLRSLVKKWQTLIEAHVDVKTTDGYMLRLFCIGFTKRRPNQVKRTCYAQASQIRQIRRKMVEIMANQASSCDLKELVSKFIPEVIGKEIEKATSSIFPLQNVFVRKVKILKAPKFDLGKLMEVHGDYAKEDIGTKLDRPAEDEAMAGQEVAAAE.

Basic residues predominate over residues Met-1–Lys-18. The segment at Met-1 to Thr-20 is disordered.

It belongs to the eukaryotic ribosomal protein eS1 family. Component of the small ribosomal subunit. Mature ribosomes consist of a small (40S) and a large (60S) subunit. The 40S subunit contains about 33 different proteins and 1 molecule of RNA (18S). The 60S subunit contains about 49 different proteins and 3 molecules of RNA (25S, 5.8S and 5S).

It is found in the cytoplasm. The chain is Small ribosomal subunit protein eS1 from Oryza sativa subsp. japonica (Rice).